The chain runs to 324 residues: MSEQALRLGTRRSKLAMAQSGQVADAVRQVTGRPVELVEITTYGDTSREHLAQIGGTGVFVTALRDALLRGEVDFAVHSLKDLPTAQPDELALAAVPVREDPRDVLVARDGLTFEELGAPSPKGTARVGTGSPRRMAQLNAYARSHGLAVETVPIRGNVDSRIGYVRSGELDGVVLAAAGLHRIGRIDEVTEFLPVDTVLPAPGQGALAIECAADNADLIAALAELDDPFTRAAVTAERSLLAALEAGCSAPVGALADLLADGQIVTEMRLRGVVGTTDGSTLVQLSTTGPVPETHDQAMALGRELAAEMLAKGAAGLMGEREH.

Cys-249 bears the S-(dipyrrolylmethanemethyl)cysteine mark.

Belongs to the HMBS family. Monomer. Dipyrromethane serves as cofactor.

It catalyses the reaction 4 porphobilinogen + H2O = hydroxymethylbilane + 4 NH4(+). The protein operates within porphyrin-containing compound metabolism; protoporphyrin-IX biosynthesis; coproporphyrinogen-III from 5-aminolevulinate: step 2/4. Tetrapolymerization of the monopyrrole PBG into the hydroxymethylbilane pre-uroporphyrinogen in several discrete steps. This is Porphobilinogen deaminase 1 (hemC1) from Streptomyces avermitilis (strain ATCC 31267 / DSM 46492 / JCM 5070 / NBRC 14893 / NCIMB 12804 / NRRL 8165 / MA-4680).